We begin with the raw amino-acid sequence, 451 residues long: Enolase (451 aa).

Gln-163 serves as a coordination point for (2R)-2-phosphoglycerate. The active-site Proton donor is Glu-205. Mg(2+) contacts are provided by Asp-258, Glu-308, and Asp-335. (2R)-2-phosphoglycerate-binding residues include Lys-360, Arg-389, Ser-390, and Lys-411. The active-site Proton acceptor is Lys-360.

The protein belongs to the enolase family. Mg(2+) is required as a cofactor.

The protein resides in the cytoplasm. The protein localises to the secreted. Its subcellular location is the cell surface. The enzyme catalyses (2R)-2-phosphoglycerate = phosphoenolpyruvate + H2O. It functions in the pathway carbohydrate degradation; glycolysis; pyruvate from D-glyceraldehyde 3-phosphate: step 4/5. Functionally, catalyzes the reversible conversion of 2-phosphoglycerate (2-PG) into phosphoenolpyruvate (PEP). It is essential for the degradation of carbohydrates via glycolysis. The sequence is that of Enolase from Mycoplasma mycoides subsp. mycoides SC (strain CCUG 32753 / NCTC 10114 / PG1).